A 239-amino-acid polypeptide reads, in one-letter code: Tungstate uptake system permease protein TupB (239 aa).

The ABC transmembrane type-1 domain occupies 37-233 (IKTTLLSSSI…LIAFCLNFIT (197 aa)). A run of 5 helical transmembrane segments spans residues 45–65 (SISIVLALLIGFPLGFILGFF), 76–96 (IVDTSLSFPTVAVGLILYALI), 114–134 (LILGQFILALPIVIALFSNLI), 168–188 (ISVVALAYGRIVAEVGVAMIV), and 212–232 (FASGIALALVLILIAFCLNFI).

This sequence belongs to the binding-protein-dependent transport system permease family. As to quaternary structure, the complex is composed of two ATP-binding proteins (TupC), two transmembrane proteins (TupB) and a solute-binding protein (TupA).

Its subcellular location is the cell inner membrane. Its function is as follows. Part of an ABC transporter complex involved in ultra-high affinity tungstate uptake. Probably responsible for the translocation of the substrate across the membrane. The sequence is that of Tungstate uptake system permease protein TupB from Campylobacter jejuni subsp. jejuni serotype O:2 (strain ATCC 700819 / NCTC 11168).